The primary structure comprises 660 residues: Probable alpha-galactosidase D (660 aa).

An N-terminal signal peptide occupies residues Met1–Leu20. Asn47, Asn91, and Asn129 each carry an N-linked (GlcNAc...) asparagine glycan. Residues Cys124 and Cys157 are joined by a disulfide bond. Asp155 serves as the catalytic Nucleophile. N-linked (GlcNAc...) asparagine glycans are attached at residues Asn182 and Asn191. Residue Glu200–Ser204 coordinates substrate. Asp222 serves as the catalytic Proton donor. N-linked (GlcNAc...) asparagine glycans are attached at residues Asn351, Asn403, Asn460, Asn492, Asn506, Asn514, and Asn584.

The protein belongs to the glycosyl hydrolase 27 family.

The protein localises to the secreted. It catalyses the reaction Hydrolysis of terminal, non-reducing alpha-D-galactose residues in alpha-D-galactosides, including galactose oligosaccharides, galactomannans and galactolipids.. Hydrolyzes a variety of simple alpha-D-galactoside as well as more complex molecules such as oligosaccharides and polysaccharides. This is Probable alpha-galactosidase D (aglD) from Aspergillus niger (strain ATCC MYA-4892 / CBS 513.88 / FGSC A1513).